The chain runs to 266 residues: Tryptophan synthase alpha chain (266 aa).

Catalysis depends on proton acceptor residues glutamate 45 and aspartate 56.

This sequence belongs to the TrpA family. As to quaternary structure, tetramer of two alpha and two beta chains.

It carries out the reaction (1S,2R)-1-C-(indol-3-yl)glycerol 3-phosphate + L-serine = D-glyceraldehyde 3-phosphate + L-tryptophan + H2O. The protein operates within amino-acid biosynthesis; L-tryptophan biosynthesis; L-tryptophan from chorismate: step 5/5. The alpha subunit is responsible for the aldol cleavage of indoleglycerol phosphate to indole and glyceraldehyde 3-phosphate. This Novosphingobium aromaticivorans (strain ATCC 700278 / DSM 12444 / CCUG 56034 / CIP 105152 / NBRC 16084 / F199) protein is Tryptophan synthase alpha chain.